The following is a 416-amino-acid chain: Serine/threonine transporter SstT (416 aa).

The next 9 membrane-spanning stretches (helical) occupy residues 14–34, 43–63, 82–102, 141–161, 192–212, 220–240, 298–318, 339–359, and 363–383; these read GSIV…ALLS, FLGT…VFVL, VLVL…VASF, ALAT…GVAL, IGVF…ALMG, LLGS…FLAI, MAGA…TLGV, ASGV…LFGI, and VAMQ…SAET.

The protein belongs to the dicarboxylate/amino acid:cation symporter (DAACS) (TC 2.A.23) family.

The protein resides in the cell inner membrane. The catalysed reaction is L-serine(in) + Na(+)(in) = L-serine(out) + Na(+)(out). The enzyme catalyses L-threonine(in) + Na(+)(in) = L-threonine(out) + Na(+)(out). In terms of biological role, involved in the import of serine and threonine into the cell, with the concomitant import of sodium (symport system). The protein is Serine/threonine transporter SstT of Laribacter hongkongensis (strain HLHK9).